A 302-amino-acid polypeptide reads, in one-letter code: GLABROUS1 enhancer-binding protein (302 aa).

Disordered stretches follow at residues 1–55 (MVTP…MKKK) and 158–229 (GQGD…NDDD). Phosphoserine is present on Ser27. Positions 180 to 195 (RTNESGEEMLKEHEEE) are enriched in basic and acidic residues. Residues 208-217 (AKTTENGTSS) show a composition bias toward polar residues. Positions 270–291 (LSDEWKALCVEETRFNIKKLRF) are non-canonical leucine-zipper.

This sequence belongs to the GeBP family. In terms of assembly, homo- and heterodimers. Interacts with GPL1, GPL2 and GPL3. Interacts with KIN10, KIN11 and FLZ4. Interacts with KIN10 and KIN11 via its N-terminal part. Interacts with GPL1 and GPL3 via its C-terminal part. In terms of tissue distribution, expressed in the apical meristem and young leaf primordia. Not detected in emerging or mature leaves. Detected in the vascular tissues of cotyledons and leaves, in hydathodes and at the base of flowers and siliques, but not in roots.

It localises to the nucleus. It is found in the nucleolus. In terms of biological role, DNA-binding protein, which specifically recognizes the GL1 enhancer sequence. May be involved in leaf initiation. May play redundant roles with GPL1 and GPL2 in cytokinin responses by regulating the transcript levels of type-A ARR response genes. Involved in stress responses. Plays a repressive role in cell expansion by counteracting the positive role of CPR5 in this process, but does not regulate cell proliferation or endoreduplication. May play a role in plant defense. The protein is GLABROUS1 enhancer-binding protein of Arabidopsis thaliana (Mouse-ear cress).